A 344-amino-acid polypeptide reads, in one-letter code: MSEAIRLTQYSHGAGCGCKISPKVLEVILAGSGAQNLDPKLWVGNASRDDAAVYALDEERGVVSTTDFFMPIVDDPFDFGRIAATNAISDIYAMGGDPLMAIAILGWPVNVLAAEVAREVIAGGRKVCEEAGIPLAGGHSIDAPEPIFGLAVTGVVEKRFMKRNDTAEAGCRLYLTKPLGIGILTTAEKKARLRAEDVGVARDWMCTLNRPGARFGRLAGVKAMTDVTGFGLLGHLVEMADGSKLTARVEYAAVPRLASAEYYLEQGCVPGGTLRNFDSYGERIAPLPEVQKLLLCDPQTSGGLLVAVAPEGEAEFLAVAAELGLQLAPIGELVERQSLAVQVL.

Cysteine 16 is an active-site residue. Residues lysine 19 and 47-49 (SRD) contribute to the ATP site. Aspartate 50 is a binding site for Mg(2+). ATP contacts are provided by residues aspartate 67, aspartate 90, and 138-140 (GHS). Aspartate 90 lines the Mg(2+) pocket. Aspartate 226 contacts Mg(2+).

Belongs to the selenophosphate synthase 1 family. Class I subfamily. As to quaternary structure, homodimer. It depends on Mg(2+) as a cofactor.

It catalyses the reaction hydrogenselenide + ATP + H2O = selenophosphate + AMP + phosphate + 2 H(+). In terms of biological role, synthesizes selenophosphate from selenide and ATP. The chain is Selenide, water dikinase from Pseudomonas aeruginosa (strain ATCC 15692 / DSM 22644 / CIP 104116 / JCM 14847 / LMG 12228 / 1C / PRS 101 / PAO1).